Consider the following 264-residue polypeptide: Acetylglutamate kinase (264 aa).

Substrate-binding positions include 40-41, arginine 62, and asparagine 158; that span reads GG.

The protein belongs to the acetylglutamate kinase family. ArgB subfamily.

It localises to the cytoplasm. It catalyses the reaction N-acetyl-L-glutamate + ATP = N-acetyl-L-glutamyl 5-phosphate + ADP. Its pathway is amino-acid biosynthesis; L-arginine biosynthesis; N(2)-acetyl-L-ornithine from L-glutamate: step 2/4. Functionally, catalyzes the ATP-dependent phosphorylation of N-acetyl-L-glutamate. The chain is Acetylglutamate kinase from Cytophaga hutchinsonii (strain ATCC 33406 / DSM 1761 / CIP 103989 / NBRC 15051 / NCIMB 9469 / D465).